The sequence spans 364 residues: Guanine nucleotide-binding protein alpha-8 subunit (364 aa).

G2 carries N-myristoyl glycine lipidation. C5 carries S-palmitoyl cysteine lipidation. Residues 38 to 364 (KILKLLILGP…QHTMQKVGIQ (327 aa)) form the G-alpha domain. Positions 41–54 (KLLILGPGESGKST) are G1 motif. Residues 46–53 (GPGESGKS), 186–192 (LKSRVPT), 211–215 (DVGGQ), 280–283 (NKID), and A336 each bind GTP. 2 residues coordinate Mg(2+): S53 and T192. The G2 motif stretch occupies residues 184–192 (DILKSRVPT). Residues 207 to 216 (FKIFDVGGQR) are G3 motif. The interval 276 to 283 (ILFLNKID) is G4 motif. The G5 motif stretch occupies residues 334–339 (TCATDT).

The protein belongs to the G-alpha family. As to quaternary structure, g proteins are composed of 3 units; alpha, beta and gamma. The alpha chain contains the guanine nucleotide binding site.

Its function is as follows. Guanine nucleotide-binding proteins (G proteins) are involved as modulators or transducers in various transmembrane signaling systems. The chain is Guanine nucleotide-binding protein alpha-8 subunit (gpa-8) from Caenorhabditis briggsae.